The chain runs to 150 residues: Aspartate 1-decarboxylase 2 (150 aa).

The active-site Schiff-base intermediate with substrate; via pyruvic acid is serine 24. Serine 24 bears the Pyruvic acid (Ser) mark. Threonine 56 contacts substrate. Tyrosine 57 functions as the Proton donor in the catalytic mechanism. 72–74 (GAA) contacts substrate.

The protein belongs to the PanD family. In terms of assembly, heterooctamer of four alpha and four beta subunits. Pyruvate is required as a cofactor. In terms of processing, is synthesized initially as an inactive proenzyme, which is activated by self-cleavage at a specific serine bond to produce a beta-subunit with a hydroxyl group at its C-terminus and an alpha-subunit with a pyruvoyl group at its N-terminus.

It localises to the cytoplasm. The enzyme catalyses L-aspartate + H(+) = beta-alanine + CO2. Its pathway is cofactor biosynthesis; (R)-pantothenate biosynthesis; beta-alanine from L-aspartate: step 1/1. Its function is as follows. Catalyzes the pyruvoyl-dependent decarboxylation of aspartate to produce beta-alanine. This is Aspartate 1-decarboxylase 2 from Mesorhizobium japonicum (strain LMG 29417 / CECT 9101 / MAFF 303099) (Mesorhizobium loti (strain MAFF 303099)).